The following is a 474-amino-acid chain: Nucleobindin-1 (474 aa).

An N-terminal signal peptide occupies residues 1–24 (MPPSGPRAALFLLPSLLLLRAVLA). Position 83 is a phosphoserine (Ser-83). Position 145 is a phosphothreonine (Thr-145). A coiled-coil region spans residues 147–215 (EARDLELLIQ…QQRRHREHPK (69 aa)). Residues 190-207 (SLGEEQRKEAERKLEEQQ) show a composition bias toward basic and acidic residues. The tract at residues 190–218 (SLGEEQRKEAERKLEEQQRRHREHPKVNV) is disordered. The tract at residues 225–318 (LKEVWEELDG…VTLEEFLAST (94 aa)) is binds to GNAI2 and GNAI3. EF-hand domains follow at residues 237 to 272 (PNRF…ELEK) and 289 to 324 (ERLR…KEFG). Ca(2+) is bound by residues Asp-250, Asn-252, Asp-254, Glu-261, Asp-302, Asn-304, Asp-306, and Glu-313. The short motif at 300 to 330 (NVDTNQDRLVTLEEFLASTQRKEFGDTGEGW) is the GBA element. A coiled-coil region spans residues 355 to 422 (AYTEEELRRF…RKQQQQSHNN (68 aa)). A disordered region spans residues 382–474 (LSQETEALGR…EPPQLDSQHL (93 aa)). Residue Ser-383 is modified to Phosphoserine. The span at 448–460 (DQKDVDASEKKVP) shows a compositional bias: basic and acidic residues. The residue at position 471 (Ser-471) is a Phosphoserine.

This sequence belongs to the nucleobindin family. In terms of assembly, interacts (via GBA motif) with guanine nucleotide-binding protein G(i) alpha subunits GNAI1, GNAI2 and GNAI3 with higher affinity for GNAI1 and GNAI3 than for GNAI2. Preferentially interacts with inactive rather than active GNAI3. Interaction with GNAI3 is inhibited when NUCB1 binds calcium, probably due to a conformational change which renders the GBA motif inaccessible. In terms of tissue distribution, expressed in bone where it is detected in the soft tissue in the center of the osteon and in the osteocyte lacuna (at protein level).

Its subcellular location is the golgi apparatus. The protein resides in the cis-Golgi network membrane. It is found in the cytoplasm. It localises to the secreted. Its function is as follows. Major calcium-binding protein of the Golgi which may have a role in calcium homeostasis. Acts as a non-receptor guanine nucleotide exchange factor which binds to and activates alpha subunits of guanine nucleotide-binding proteins (G proteins). The chain is Nucleobindin-1 (NUCB1) from Bos taurus (Bovine).